A 291-amino-acid polypeptide reads, in one-letter code: Elongation factor Ts (291 aa).

An involved in Mg(2+) ion dislocation from EF-Tu region spans residues 79–82; the sequence is TDFV.

The protein belongs to the EF-Ts family.

The protein resides in the cytoplasm. Associates with the EF-Tu.GDP complex and induces the exchange of GDP to GTP. It remains bound to the aminoacyl-tRNA.EF-Tu.GTP complex up to the GTP hydrolysis stage on the ribosome. The polypeptide is Elongation factor Ts (Anaplasma marginale (strain Florida)).